The primary structure comprises 166 residues: MIYVDNRQEKMEVSDEFTNHLEKVIEFALKEEDVNIPSEISLLFVDNEEIREINNETRNIDRATDVLSFPMLDYPEKKVFKEVYTENDFSEADFDGDDLVLGDIVLSLERALEQSKEYNHSYEREASYLVVHSVLHLLGYDHMEEDDKVKMRKREEEILTALDIRR.

His-132, His-136, and His-142 together coordinate Zn(2+).

The protein belongs to the endoribonuclease YbeY family. Zn(2+) serves as cofactor.

The protein localises to the cytoplasm. Functionally, single strand-specific metallo-endoribonuclease involved in late-stage 70S ribosome quality control and in maturation of the 3' terminus of the 16S rRNA. In Clostridium botulinum (strain Alaska E43 / Type E3), this protein is Endoribonuclease YbeY.